The primary structure comprises 70 residues: Large ribosomal subunit protein eL38 (70 aa).

The protein belongs to the eukaryotic ribosomal protein eL38 family.

This chain is Large ribosomal subunit protein eL38 (RpL38), found in Bombyx mori (Silk moth).